A 445-amino-acid polypeptide reads, in one-letter code: Putative U-box domain-containing protein 47 (445 aa).

The region spanning 64-137 is the U-box domain; it reads EVPKEFICTL…KEWCLIHNFD (74 aa).

It carries out the reaction S-ubiquitinyl-[E2 ubiquitin-conjugating enzyme]-L-cysteine + [acceptor protein]-L-lysine = [E2 ubiquitin-conjugating enzyme]-L-cysteine + N(6)-ubiquitinyl-[acceptor protein]-L-lysine.. The protein operates within protein modification; protein ubiquitination. In terms of biological role, functions as an E3 ubiquitin ligase. The sequence is that of Putative U-box domain-containing protein 47 (PUB47) from Arabidopsis thaliana (Mouse-ear cress).